We begin with the raw amino-acid sequence, 171 residues long: MFDIGFSELLLVFIIGLVVLGPQRLPVAVKTVAGWIRALRSLATTVQNELTQELKLQEFQDSLKKVEKASLTNLTPELKASMDELRQAAESMKRSYVANDPEKASDEAHTIHNPVVKDNEAAHEGVTPAAAQTQASSPEQKPETTPEPVVKPAADAEPKTAAPSPSSSDKP.

A helical transmembrane segment spans residues 1 to 21 (MFDIGFSELLLVFIIGLVVLG). The segment at 117–171 (KDNEAAHEGVTPAAAQTQASSPEQKPETTPEPVVKPAADAEPKTAAPSPSSSDKP) is disordered. Residues 130–139 (AAQTQASSPE) are compositionally biased toward polar residues.

The protein belongs to the TatB family. As to quaternary structure, the Tat system comprises two distinct complexes: a TatABC complex, containing multiple copies of TatA, TatB and TatC subunits, and a separate TatA complex, containing only TatA subunits. Substrates initially bind to the TatABC complex, which probably triggers association of the separate TatA complex to form the active translocon.

The protein localises to the cell inner membrane. Its function is as follows. Part of the twin-arginine translocation (Tat) system that transports large folded proteins containing a characteristic twin-arginine motif in their signal peptide across membranes. Together with TatC, TatB is part of a receptor directly interacting with Tat signal peptides. TatB may form an oligomeric binding site that transiently accommodates folded Tat precursor proteins before their translocation. This is Sec-independent protein translocase protein TatB from Escherichia coli O157:H7.